Reading from the N-terminus, the 72-residue chain is Beta-defensin 104A (72 aa).

Residues Met-1 to Ser-22 form the signal peptide. 3 disulfide bridges follow: Cys-30/Cys-57, Cys-37/Cys-51, and Cys-41/Cys-58.

The protein belongs to the beta-defensin family.

It localises to the secreted. Has antimicrobial activity. This chain is Beta-defensin 104A (DEFB104A), found in Pongo pygmaeus (Bornean orangutan).